Reading from the N-terminus, the 278-residue chain is Indole-3-glycerol phosphate synthase (278 aa).

The protein belongs to the TrpC family.

The catalysed reaction is 1-(2-carboxyphenylamino)-1-deoxy-D-ribulose 5-phosphate + H(+) = (1S,2R)-1-C-(indol-3-yl)glycerol 3-phosphate + CO2 + H2O. It participates in amino-acid biosynthesis; L-tryptophan biosynthesis; L-tryptophan from chorismate: step 4/5. In Pseudomonas fluorescens (strain ATCC BAA-477 / NRRL B-23932 / Pf-5), this protein is Indole-3-glycerol phosphate synthase.